The following is a 148-amino-acid chain: MNKIQQINDKELQSGILSPHQSWHNEYKDNAYIYIGNLNRELTEGDILTVFSEYGVPVDVILSRDENTGESQGFAYLKYEDQRSTILAVDNLNGFKIGGRALKIDHTFYRPKRSLQKYYEAVKEELDRDIVSKNNAEKLILAKKDQPN.

Positions 31 to 109 constitute an RRM domain; it reads AYIYIGNLNR…RALKIDHTFY (79 aa).

It belongs to the IST3 family. Component of the 45S U1.U2.U4/U6.U5 penta-snRNP particle, a subcomplex of the spliceosome. Belongs to the CWC complex (or CEF1-associated complex), a spliceosome sub-complex reminiscent of a late-stage spliceosome composed of the U2, U5 and U6 snRNAs and at least BUD13, BUD31, BRR2, CDC40, CEF1, CLF1, CUS1, CWC2, CWC15, CWC21, CWC22, CWC23, CWC24, CWC25, CWC27, ECM2, HSH155, IST3, ISY1, LEA1, MSL1, NTC20, PRP8, PRP9, PRP11, PRP19, PRP21, PRP22, PRP45, PRP46, SLU7, SMB1, SMD1, SMD2, SMD3, SMX2, SMX3, SNT309, SNU114, SPP2, SYF1, SYF2, RSE1 and YJU2. Belongs to the pre-mRNA retention and splicing (RES) complex composed of at least BUD13, IST3 and PML1. Subunit of the U2 snRNP. Interacts with RDS3.

It localises to the cytoplasm. The protein resides in the nucleus. Its function is as follows. Required for pre-mRNA splicing and spliceosome assembly. As part of the pre-mRNA retention and splicing (RES) complex, required for nuclear pre-mRNA retention and efficient splicing. Required for MER1-activated splicing. This is U2 snRNP component IST3 (IST3) from Saccharomyces cerevisiae (strain ATCC 204508 / S288c) (Baker's yeast).